Consider the following 238-residue polypeptide: MQLPALQSAKLIRRYKRFLADIELPTGDVMTIHCANTGAMTGCGEKGDTIWYSHSDSQTRKYPHSWELTQLANGQLCCINTHRSNQLVFEALQNKQIKELAMYDEIYPEVKYGEENSRIDFLLKGEGLPDCYVEVKSITLVKGNLGMFPDAVTTRGQKHVRELLAMKKQGHRAVVLFAGLHNGFDRFKIAEYIDPEYDRLLKEAMEQGVEAYAYAGQFEISNEIPTALSLTESVPYIK.

This sequence belongs to the SfsA family.

In Haemophilus influenzae (strain 86-028NP), this protein is Sugar fermentation stimulation protein homolog.